Reading from the N-terminus, the 181-residue chain is dTDP-4-dehydrorhamnose 3,5-epimerase (181 aa).

Substrate contacts are provided by residues R23, E28, 47-49 (QDN), and R59. H62 functions as the Proton acceptor in the catalytic mechanism. Positions 72 and 119 each coordinate substrate. Residue Y132 is the Proton donor of the active site. Substrate contacts are provided by E143 and K167.

It belongs to the dTDP-4-dehydrorhamnose 3,5-epimerase family. In terms of assembly, homodimer.

The enzyme catalyses dTDP-4-dehydro-6-deoxy-alpha-D-glucose = dTDP-4-dehydro-beta-L-rhamnose. It participates in carbohydrate biosynthesis; dTDP-L-rhamnose biosynthesis. It functions in the pathway bacterial outer membrane biogenesis; LPS O-antigen biosynthesis. Catalyzes the epimerization of the C3' and C5'positions of dTDP-6-deoxy-D-xylo-4-hexulose, forming dTDP-6-deoxy-L-lyxo-4-hexulose. This chain is dTDP-4-dehydrorhamnose 3,5-epimerase (rfbC), found in Shigella flexneri.